A 290-amino-acid chain; its full sequence is TIP41-like protein (290 aa).

This sequence belongs to the TIP41 family. In terms of assembly, interacts with TAP46. Widely expressed.

In terms of biological role, may be involved in the regulation of the TOR signaling pathway. Indirectly activates the PP2A phosphatase via interaction with its suppressor TAP46. Could play a role in cytoskeleton functions. The protein is TIP41-like protein of Arabidopsis thaliana (Mouse-ear cress).